Consider the following 116-residue polypeptide: Vesicle-associated membrane protein 5 (116 aa).

The Cytoplasmic portion of the chain corresponds to 1–72 (MAGKELERCQ…RWENARCRIY (72 aa)). The v-SNARE coiled-coil homology domain maps to 5 to 65 (ELERCQRQAD…KTLAQKKRWE (61 aa)). 3 positions are modified to phosphoserine: S41, S48, and S49. The helical; Anchor for type IV membrane protein transmembrane segment at 73–93 (MGLAVGIALLILLIVLLVIFL) threads the bilayer. The Vesicular portion of the chain corresponds to 94-116 (PQSSKGSSAPQVQDAGPASGPGE). A disordered region spans residues 97–116 (SKGSSAPQVQDAGPASGPGE).

Belongs to the synaptobrevin family.

The protein resides in the cell membrane. It localises to the endomembrane system. The protein localises to the golgi apparatus. Its subcellular location is the trans-Golgi network membrane. May participate in trafficking events that are associated with myogenesis, such as myoblast fusion and/or GLUT4 trafficking. This Bos taurus (Bovine) protein is Vesicle-associated membrane protein 5 (VAMP5).